The following is a 146-amino-acid chain: Cystatin-C (146 aa).

An N-terminal signal peptide occupies residues 1–26 (MAGPLRAPLLLLAILAVALAVSPAAG). Ser43 is subject to Phosphoserine; by FAM20C. The Secondary area of contact signature appears at 81–85 (QIVAG). Intrachain disulfides connect Cys99–Cys109 and Cys123–Cys143.

This sequence belongs to the cystatin family. In terms of assembly, homodimer. Post-translationally, the Thr-25 variant is O-glycosylated with a core 1 or possibly core 8 glycan. The signal peptide of the O-glycosylated Thr-25 variant is cleaved between Ala-20 and Val-21. As to expression, expressed in submandibular and sublingual saliva but not in parotid saliva (at protein level). Expressed in various body fluids, such as the cerebrospinal fluid and plasma. Expressed in highest levels in the epididymis, vas deferens, brain, thymus, and ovary and the lowest in the submandibular gland.

Its subcellular location is the secreted. Functionally, as an inhibitor of cysteine proteinases, this protein is thought to serve an important physiological role as a local regulator of this enzyme activity. This Homo sapiens (Human) protein is Cystatin-C (CST3).